Reading from the N-terminus, the 245-residue chain is Ribonuclease PH (245 aa).

Residues arginine 86 and 124 to 126 (GTR) each bind phosphate.

The protein belongs to the RNase PH family. Homohexameric ring arranged as a trimer of dimers.

The catalysed reaction is tRNA(n+1) + phosphate = tRNA(n) + a ribonucleoside 5'-diphosphate. Its function is as follows. Phosphorolytic 3'-5' exoribonuclease that plays an important role in tRNA 3'-end maturation. Removes nucleotide residues following the 3'-CCA terminus of tRNAs; can also add nucleotides to the ends of RNA molecules by using nucleoside diphosphates as substrates, but this may not be physiologically important. Probably plays a role in initiation of 16S rRNA degradation (leading to ribosome degradation) during starvation. This chain is Ribonuclease PH, found in Bacillus cytotoxicus (strain DSM 22905 / CIP 110041 / 391-98 / NVH 391-98).